Reading from the N-terminus, the 978-residue chain is Regulator of MON1-CCZ1 complex homolog (978 aa).

Composition is skewed to low complexity over residues 311–351 (TSTP…MISS) and 479–495 (NNNN…NNNN). 4 disordered regions span residues 311–363 (TSTP…HKEQ), 474–546 (SINQ…NSKT), 558–665 (KQQQ…NNHV), and 703–727 (EKEK…NNNI). Residues 496-515 (TAQTLNSTGNLSNSISIGGM) are compositionally biased toward polar residues. Residues 516–539 (NTSTDNLTTTTTTSSSISSSPSNS) are compositionally biased toward low complexity. Residues 582 to 591 (GDGGSGGSGG) show a composition bias toward gly residues. 2 stretches are compositionally biased toward low complexity: residues 592–663 (SFYN…NNNN) and 710–727 (NNNN…NNNI). The Mic1 domain occupies 735-908 (KLELDSKYLI…HPSFDKYIKL (174 aa)). Residues 955–978 (NNSSPTLRSSNSLNSSPRLQYSNN) are disordered.

The protein belongs to the RMC1 family.

Its subcellular location is the lysosome membrane. The protein localises to the late endosome membrane. In terms of biological role, may have a role in autophagy. The chain is Regulator of MON1-CCZ1 complex homolog from Dictyostelium discoideum (Social amoeba).